The sequence spans 906 residues: Protein translocase subunit SecA (906 aa).

ATP is bound by residues Gln86, 104–108 (GEGKT), and Asp511. Over residues 852–888 (EHESVIDNNQRHDEDEQEEAPKVKQVRREGPKVKRND) the composition is skewed to basic and acidic residues. Residues 852–906 (EHESVIDNNQRHDEDEQEEAPKVKQVRREGPKVKRNDPCPCGSGKKYKQCHSKVE) are disordered. Zn(2+) contacts are provided by Cys890, Cys892, Cys901, and His902. A compositionally biased stretch (basic residues) spans 896-906 (KKYKQCHSKVE).

This sequence belongs to the SecA family. In terms of assembly, monomer and homodimer. Part of the essential Sec protein translocation apparatus which comprises SecA, SecYEG and auxiliary proteins SecDF-YajC and YidC. Zn(2+) is required as a cofactor.

The protein resides in the cell inner membrane. It localises to the cytoplasm. The enzyme catalyses ATP + H2O + cellular proteinSide 1 = ADP + phosphate + cellular proteinSide 2.. Its function is as follows. Part of the Sec protein translocase complex. Interacts with the SecYEG preprotein conducting channel. Has a central role in coupling the hydrolysis of ATP to the transfer of proteins into and across the cell membrane, serving both as a receptor for the preprotein-SecB complex and as an ATP-driven molecular motor driving the stepwise translocation of polypeptide chains across the membrane. The polypeptide is Protein translocase subunit SecA (Francisella tularensis subsp. tularensis (strain SCHU S4 / Schu 4)).